The following is an 817-amino-acid chain: Protein hunchback (817 aa).

Disordered regions lie at residues 51–77 (PGTI…HSPL), 93–132 (HNGG…TSSA), and 187–252 (YSQQ…EDQD). Residues 62–76 (QQHSSMMASQPQHSP) show a composition bias toward low complexity. Positions 103–119 (FSDNSGAMTPSPNTNVG) are enriched in polar residues. Over residues 189-201 (QQQQQQQQRQLQQ) the composition is skewed to low complexity. C2H2-type zinc fingers lie at residues 287–309 (HKCK…ARTH), 316–338 (LQCP…IRKH), 344–366 (FQCD…RKSH), and 372–396 (YRCA…KYEH). 4 disordered regions span residues 456 to 477 (PLQQ…SSVA), 491 to 513 (QNLA…SSQQ), 564 to 619 (QLQQ…QQTP), and 666 to 758 (APTS…AGNS). Low complexity predominate over residues 564–576 (QLQQQQQNKQANE). A compositionally biased stretch (acidic residues) spans 577 to 595 (NGEEDEEDNDEVDEDEEEF). Positions 680-694 (MPPTTSSPIHPSQVN) are enriched in polar residues. Residues 721-758 (PTTANTSASSTASSSGNSSNSSSTSTSSNSNSSSAGNS) show a composition bias toward low complexity. 2 C2H2-type zinc fingers span residues 764 to 786 (YECK…MGYH) and 792 to 816 (FKCN…RNAH).

Belongs to the hunchback C2H2-type zinc-finger protein family.

The protein localises to the nucleus. In terms of biological role, gap class segmentation protein that controls development of head structures. The polypeptide is Protein hunchback (hb) (Musca domestica (House fly)).